Consider the following 437-residue polypeptide: Glutamate-1-semialdehyde 2,1-aminomutase (437 aa).

K274 bears the N6-(pyridoxal phosphate)lysine mark.

The protein belongs to the class-III pyridoxal-phosphate-dependent aminotransferase family. HemL subfamily. Homodimer. Requires pyridoxal 5'-phosphate as cofactor.

The protein resides in the cytoplasm. It carries out the reaction (S)-4-amino-5-oxopentanoate = 5-aminolevulinate. It functions in the pathway porphyrin-containing compound metabolism; protoporphyrin-IX biosynthesis; 5-aminolevulinate from L-glutamyl-tRNA(Glu): step 2/2. The polypeptide is Glutamate-1-semialdehyde 2,1-aminomutase (Leptothrix cholodnii (strain ATCC 51168 / LMG 8142 / SP-6) (Leptothrix discophora (strain SP-6))).